The primary structure comprises 365 residues: MTITGIIAEFNPFHNGHKYLLDQAEGLKIVAMSGNFMQRGEPAIVDKWTRAQMALENGADLVVELPFLVSVQAADFFGQGAVDILDRLGIDSLVFGTEEVLDYQKIADLYTEKGAEMEKFVKNLPDSLSYPQKTQAMWKEFAGLDFSGNTPNHVLALAYAKAVAGRNIKLHPIQRQGAGYHSVNKDVDFASATALRQHQKDQDFLERFMPSVALFEQASKVIWEDYFPLLRYQILSNPDLTTIYQVNQEMAVRIKEAIKTAQSVEELVELVTTKRYTKARVRRLLTYILVQARENVLPEAIHVLGFTEKGRQHLKSLKGQVNLVSRIGKEPWDAMTQKVDQIYQLGKPSIAEQNFGRVPIRIETN.

ATP-binding positions include 7-20, glycine 96, asparagine 152, and arginine 175; that span reads IAEF…HKYL.

It belongs to the TmcAL family.

Its subcellular location is the cytoplasm. It carries out the reaction cytidine(34) in elongator tRNA(Met) + acetate + ATP = N(4)-acetylcytidine(34) in elongator tRNA(Met) + AMP + diphosphate. Its function is as follows. Catalyzes the formation of N(4)-acetylcytidine (ac(4)C) at the wobble position of elongator tRNA(Met), using acetate and ATP as substrates. First activates an acetate ion to form acetyladenylate (Ac-AMP) and then transfers the acetyl group to tRNA to form ac(4)C34. The protein is tRNA(Met) cytidine acetate ligase of Streptococcus pneumoniae (strain P1031).